Reading from the N-terminus, the 1111-residue chain is Probable arabinosyltransferase A (1111 aa).

13 helical membrane-spanning segments follow: residues 12-34, 205-224, 333-355, 370-387, 394-413, 423-445, 462-484, 530-547, 554-576, 581-603, 615-637, 652-674, and 695-717; these read IIRLIAVGAGITGLLLCAVVPLL, IAVGVGAAAVLIAILALSAL, VWMRIPATLAGIACWLIINHWVL, VAVLTAGAMFLAAWLPFN, PLIALGVLFTWVLVERAIAL, AVVAILTATLAPQGLIAIAALLT, GLLAPLLVLAASLSLITLVVFHS, FPVLVLLLCMFGVLVVLL, GLASGPTWRLIGTTATSLLLLTF, WAIQFGALAGLTGTFGAIAAFAF, TVYITALLFVLAWATAGINGWFG, IAGHPVTSIFLTLSILTGLLAGG, and FLATTPLVVVATTMVLCEVGSLA. The tract at residues 804-831 is disordered; that stretch reads GLVNSDASPNKPNVTFSDSAGTAGGKGP. The span at 808–823 shows a compositional bias: polar residues; the sequence is SDASPNKPNVTFSDSA.

The protein belongs to the emb family.

The protein resides in the cell membrane. Arabinosyl transferase responsible for the polymerization of arabinose into the arabinan of arabinogalactan. The sequence is that of Probable arabinosyltransferase A (embA) from Mycobacterium leprae (strain TN).